The chain runs to 451 residues: UDP-glycosyltransferase 13 (451 aa).

The Proton acceptor role is filled by histidine 15. Residue histidine 15 coordinates an anthocyanidin. Aspartate 93 (charge relay) is an active-site residue. Alanine 326, glutamine 328, histidine 343, tryptophan 346, asparagine 347, serine 348, and glutamate 351 together coordinate UDP-alpha-D-glucose. Alanine 366 contacts an anthocyanidin. Positions 367 and 368 each coordinate UDP-alpha-D-glucose.

This sequence belongs to the UDP-glycosyltransferase family. Expressed in roots. Detected in stems and leaves.

It catalyses the reaction a 7-hydroxyisoflavone + UDP-alpha-D-glucose = a 7-hydroxyisoflavone 7-O-beta-D-glucoside + UDP + H(+). Functionally, isoflavone 7-O-glucosyltransferase converting daidzein to daidzin, genistein to genistin and formononetin to ononin. Shows some activity toward the flavanones liquiritigenin and naringenin, but not toward cyanidin, isoliquiritigenin, apigenin, luteolin, kaempferol, quercetin, daidzin and puerarin. The protein is UDP-glycosyltransferase 13 of Pueraria montana var. lobata (Kudzu vine).